Here is a 93-residue protein sequence, read N- to C-terminus: Large ribosomal subunit protein bL31B (93 aa).

The protein belongs to the bacterial ribosomal protein bL31 family. Type B subfamily. As to quaternary structure, part of the 50S ribosomal subunit.

The chain is Large ribosomal subunit protein bL31B from Pseudomonas syringae pv. tomato (strain ATCC BAA-871 / DC3000).